The following is a 612-amino-acid chain: Chaperone protein DnaK (612 aa).

Thr174 carries the phosphothreonine; by autocatalysis modification. A disordered region spans residues 579–612 (GSAGTGAGSQAGSAAGSGDGQSMDAEFKVKDEDK). Residues 581-597 (AGTGAGSQAGSAAGSGD) are compositionally biased toward gly residues. The span at 603–612 (AEFKVKDEDK) shows a compositional bias: basic and acidic residues.

Belongs to the heat shock protein 70 family.

Acts as a chaperone. The chain is Chaperone protein DnaK from Symbiobacterium thermophilum (strain DSM 24528 / JCM 14929 / IAM 14863 / T).